The primary structure comprises 244 residues: SURF1-like protein (244 aa).

2 helical membrane-spanning segments follow: residues Ile7–Ser23 and Tyr201–Tyr219.

Belongs to the SURF1 family.

It is found in the cell membrane. The protein is SURF1-like protein of Rickettsia prowazekii (strain Madrid E).